The following is a 289-amino-acid chain: Eukaryotic translation initiation factor 3 subunit G (289 aa).

The segment at 1–33 is disordered; sequence MSRPTKADWADDEEFDDPSALPPQQITTNKDGT. The RRM domain occupies 209–287; that stretch reads ATLRVTNVSE…LILRVEFAKR (79 aa).

The protein belongs to the eIF-3 subunit G family. In terms of assembly, component of the eukaryotic translation initiation factor 3 (eIF-3) complex.

It is found in the cytoplasm. RNA-binding component of the eukaryotic translation initiation factor 3 (eIF-3) complex, which is involved in protein synthesis of a specialized repertoire of mRNAs and, together with other initiation factors, stimulates binding of mRNA and methionyl-tRNAi to the 40S ribosome. The eIF-3 complex specifically targets and initiates translation of a subset of mRNAs involved in cell proliferation. This subunit can bind 18S rRNA. The sequence is that of Eukaryotic translation initiation factor 3 subunit G (tif35) from Emericella nidulans (strain FGSC A4 / ATCC 38163 / CBS 112.46 / NRRL 194 / M139) (Aspergillus nidulans).